The sequence spans 355 residues: MFVKLLRSVAIGLIVGAILLVAMPSLRSLNPLSTPQFDSTDETPASYNLAVRRAAPAVVNVYNRGLNTNSHNQLEIRTLGSGVIMDQRGYIITNKHVINDADQIIVALQDGRVFEALLVGSDSLTDLAVLKINATGGLPTIPINARRVPHIGDVVLAIGNPYNLGQTITQGIISATGRIGLNPTGRQNFLQTDASINHGNSGGALVNSLGELMGINTLSFDKSNDGETPEGIGFAIPFQLATKIMDKLIRDGRVIRGYIGIGGREIAPLHAQGGGIDQLQGIVVNEVSPDGPAANAGIQVNDLIISVDNKPAISALETMDQVAEIRPGSVIPVVVMRDDKQLTLQVTIQEYPATN.

The Cytoplasmic segment spans residues 1 to 4; that stretch reads MFVK. Residues 5–27 traverse the membrane as a helical segment; it reads LLRSVAIGLIVGAILLVAMPSLR. At 28 to 355 the chain is on the periplasmic side; the sequence is SLNPLSTPQF…VTIQEYPATN (328 aa). Residues H96 and D126 each act as charge relay system in the active site. A substrate-binding site is contributed by T184. S201 serves as the catalytic Charge relay system. 259 to 264 lines the substrate pocket; that stretch reads IGIGGR. A PDZ domain is found at 281–326; sequence GIVVNEVSPDGPAANAGIQVNDLIISVDNKPAISALETMDQVAEIR. Y351 is a binding site for substrate.

It belongs to the peptidase S1C family. In terms of assembly, homotrimer.

The protein resides in the cell inner membrane. The catalysed reaction is Acts on substrates that are at least partially unfolded. The cleavage site P1 residue is normally between a pair of hydrophobic residues, such as Val-|-Val.. Its activity is regulated as follows. Allosterically activated by the C-terminus of exposed OMP peptides (consensus Tyr-X-Phe-COOH); cleavage only occurs in the presence of peptides. Inhibited when RseB is bound to RseA. A site-1 protease (S1P) that cleaves the peptide bond between 'Val-148' and 'Ser-149' in RseA. Part of a regulated intramembrane proteolysis (RIP) cascade. When heat shock or other environmental stresses disrupt protein folding in the periplasm, DegS senses the accumulation of unassembled outer membrane porins (OMP) and then initiates RseA (anti sigma-E factor) degradation by cleaving its periplasmic domain, making it a substrate for subsequent cleavage by RseP. This cascade ultimately leads to the sigma-E-driven expression of a variety of factors dealing with folding stress in the periplasm and OMP assembly. Required for basal and stress-induced degradation of RseA. The sequence is that of Serine endoprotease DegS (degS) from Escherichia coli O157:H7.